A 363-amino-acid polypeptide reads, in one-letter code: Chorismate synthase (363 aa).

Positions 44 to 63 are disordered; it reads DLDRRKPGTSRHTTQRQEPD. R48 and R54 together coordinate NADP(+). FMN contacts are provided by residues 125–127, 237–238, G277, 292–296, and R318; these read RSS, NA, and KPTSS.

Belongs to the chorismate synthase family. As to quaternary structure, homotetramer. The cofactor is FMNH2.

It carries out the reaction 5-O-(1-carboxyvinyl)-3-phosphoshikimate = chorismate + phosphate. The protein operates within metabolic intermediate biosynthesis; chorismate biosynthesis; chorismate from D-erythrose 4-phosphate and phosphoenolpyruvate: step 7/7. In terms of biological role, catalyzes the anti-1,4-elimination of the C-3 phosphate and the C-6 proR hydrogen from 5-enolpyruvylshikimate-3-phosphate (EPSP) to yield chorismate, which is the branch point compound that serves as the starting substrate for the three terminal pathways of aromatic amino acid biosynthesis. This reaction introduces a second double bond into the aromatic ring system. This chain is Chorismate synthase, found in Pseudomonas fluorescens (strain ATCC BAA-477 / NRRL B-23932 / Pf-5).